A 440-amino-acid polypeptide reads, in one-letter code: MSKIVYKFGGTSLATAENICLVCDIICKDKPSFVVVSAIAGVTDLLVDFCSSSLREREEVLRKIEGKHEEIVKNLAIPFPVSTWTSRLLPYLQHLEISDLDFARILSLGEDISASLVRAVCSTRGWDLGFLEARSVILTDDSYRRASPNLDLMKAHWHQLELNQPSYIIQGFIGSNGLGETVLLGRGGSDYSATLIAELARATEVRIYTDVNGIYTMDPKVISDAQRIPELSFEEMQNLASFGAKVLYPPMLFPCMRAGIPIFVTSTFDPEKGGTWVYAVDKSVSYEPRIKALSLSQYQSFCSVDYTVLGCGGLEEILGILESHGIDPELMIAQNNVVGFVMDDDIISQEAQEHLVDVLSLSSVTRLHHSVALITMIGDNLSSPKVVSTITEKLRGFQGPVFCFCQSSMALSFVVASELAEGIIEELHNDYVKQKAIVAT.

This sequence belongs to the aspartokinase family.

The catalysed reaction is L-aspartate + ATP = 4-phospho-L-aspartate + ADP. It participates in amino-acid biosynthesis; L-lysine biosynthesis via DAP pathway; (S)-tetrahydrodipicolinate from L-aspartate: step 1/4. It functions in the pathway amino-acid biosynthesis; L-methionine biosynthesis via de novo pathway; L-homoserine from L-aspartate: step 1/3. Its pathway is amino-acid biosynthesis; L-threonine biosynthesis; L-threonine from L-aspartate: step 1/5. This chain is Aspartokinase (lysC), found in Chlamydia pneumoniae (Chlamydophila pneumoniae).